The following is a 46-amino-acid chain: Apamin (46 aa).

Residues 1-27 (MISMLRCISLFLSVILITGYFVTPVMS) form the signal peptide. Intrachain disulfides connect C28/C38 and C30/C42. Residues 40–41 (RR) form an essential for toxin activity region. Position 45 is a histidine amide (H45).

As to expression, expressed by the venom gland.

The protein resides in the secreted. Neurotoxin that blocks voltage-independent calcium-activated potassium channels (KCNN1=SK1, KCNN2=SK2, KCNN3=SK3). This Apis cerana cerana (Oriental honeybee) protein is Apamin.